The primary structure comprises 423 residues: Zinc-type alcohol dehydrogenase-like protein C1198.01 (423 aa).

The interval 14 to 36 is disordered; it reads KQLGHREVSEGSTQPKPDPSGAT. Zn(2+)-binding residues include Cys74, His97, Cys127, Cys130, Cys133, and Cys141.

The protein belongs to the zinc-containing alcohol dehydrogenase family. Class-III subfamily. Zn(2+) serves as cofactor.

Its subcellular location is the golgi apparatus. The polypeptide is Zinc-type alcohol dehydrogenase-like protein C1198.01 (Schizosaccharomyces pombe (strain 972 / ATCC 24843) (Fission yeast)).